The following is a 342-amino-acid chain: Putative gluconeogenesis factor (342 aa).

The interval S318 to R342 is disordered. Phosphothreonine is present on T325. Residues G333–R342 show a composition bias toward basic and acidic residues.

This sequence belongs to the gluconeogenesis factor family. Post-translationally, phosphorylated by PknA and/or PknB.

It is found in the cytoplasm. Required for morphogenesis under gluconeogenic growth conditions. In Mycobacterium tuberculosis (strain CDC 1551 / Oshkosh), this protein is Putative gluconeogenesis factor.